Consider the following 573-residue polypeptide: Isocitrate dehydrogenase kinase/phosphatase (573 aa).

Residues 317 to 323 (APGVRGM) and K338 each bind ATP. D373 is an active-site residue.

The protein belongs to the AceK family.

The protein localises to the cytoplasm. The enzyme catalyses L-seryl-[isocitrate dehydrogenase] + ATP = O-phospho-L-seryl-[isocitrate dehydrogenase] + ADP + H(+). Functionally, bifunctional enzyme which can phosphorylate or dephosphorylate isocitrate dehydrogenase (IDH) on a specific serine residue. This is a regulatory mechanism which enables bacteria to bypass the Krebs cycle via the glyoxylate shunt in response to the source of carbon. When bacteria are grown on glucose, IDH is fully active and unphosphorylated, but when grown on acetate or ethanol, the activity of IDH declines drastically concomitant with its phosphorylation. The protein is Isocitrate dehydrogenase kinase/phosphatase of Pseudomonas fluorescens (strain ATCC BAA-477 / NRRL B-23932 / Pf-5).